The chain runs to 57 residues: Stress response protein (57 aa).

A Nuclear localization signal motif is present at residues 6-10 (RKERR).

Mesophyll protoplasts.

The protein resides in the nucleus. In terms of biological role, stress response. May play a role in the reentering of protoplasts into the cell cycle. This chain is Stress response protein, found in Nicotiana sylvestris (Wood tobacco).